Consider the following 604-residue polypeptide: Netrin-1 (604 aa).

The N-terminal stretch at Met1–Gly24 is a signal peptide. Residues His47 to Arg284 enclose the Laminin N-terminal domain. N-linked (GlcNAc...) asparagine glycosylation is found at Asn95, Asn116, and Asn131. Disulfide bonds link Cys119–Cys152, Cys285–Cys294, Cys287–Cys304, Cys306–Cys315, Cys318–Cys338, Cys341–Cys350, Cys343–Cys368, Cys371–Cys380, Cys383–Cys401, Cys404–Cys416, Cys406–Cys423, Cys425–Cys434, Cys437–Cys451, Cys472–Xaa544, and Cys491–Cys601. Laminin EGF-like domains lie at Cys285–Ala340, Cys341–Ala403, and Cys404–Lys453. An N-linked (GlcNAc...) asparagine glycan is attached at Asn417. The NTR domain maps to Cys472 to Cys601. Residues Arg530–Asp532 carry the Cell attachment site motif.

Binds to its receptors; DCC, UNC5A, UNC5B, UNC5C and probably UNC5D. Binds to its receptor; DSCAM. Interacts with APP.

It localises to the secreted. Its subcellular location is the cytoplasm. Its function is as follows. Netrins control guidance of CNS commissural axons and peripheral motor axons. Its association with either DCC or some UNC5 receptors will lead to axon attraction or repulsion, respectively. Binding to UNC5C might cause dissociation of UNC5C from polymerized TUBB3 in microtubules and thereby lead to increased microtubule dynamics and axon repulsion. Involved in dorsal root ganglion axon projection towards the spinal cord. It also serves as a survival factor via its association with its receptors which prevent the initiation of apoptosis. Involved in colorectal tumorigenesis by regulating apoptosis. The chain is Netrin-1 (Ntn1) from Rattus norvegicus (Rat).